The following is a 35-amino-acid chain: Photosystem II reaction center protein T (35 aa).

The helical transmembrane segment at 3-23 threads the bilayer; the sequence is ALVYTFLLVSTLGIIFFAIFF.

The protein belongs to the PsbT family. In terms of assembly, PSII is composed of 1 copy each of membrane proteins PsbA, PsbB, PsbC, PsbD, PsbE, PsbF, PsbH, PsbI, PsbJ, PsbK, PsbL, PsbM, PsbT, PsbY, PsbZ, Psb30/Ycf12, at least 3 peripheral proteins of the oxygen-evolving complex and a large number of cofactors. It forms dimeric complexes.

The protein localises to the plastid. It localises to the chloroplast thylakoid membrane. Found at the monomer-monomer interface of the photosystem II (PS II) dimer, plays a role in assembly and dimerization of PSII. PSII is a light-driven water plastoquinone oxidoreductase, using light energy to abstract electrons from H(2)O, generating a proton gradient subsequently used for ATP formation. The polypeptide is Photosystem II reaction center protein T (Saururus cernuus (Lizard's tail)).